A 635-amino-acid chain; its full sequence is Threonine--tRNA ligase (635 aa).

Residues Met-1–Thr-61 enclose the TGS domain. The tract at residues Asp-242–Pro-533 is catalytic. Zn(2+) is bound by residues Cys-333, His-384, and His-510.

It belongs to the class-II aminoacyl-tRNA synthetase family. Homodimer. Requires Zn(2+) as cofactor.

It is found in the cytoplasm. The enzyme catalyses tRNA(Thr) + L-threonine + ATP = L-threonyl-tRNA(Thr) + AMP + diphosphate + H(+). Its function is as follows. Catalyzes the attachment of threonine to tRNA(Thr) in a two-step reaction: L-threonine is first activated by ATP to form Thr-AMP and then transferred to the acceptor end of tRNA(Thr). Also edits incorrectly charged L-seryl-tRNA(Thr). This Variovorax paradoxus (strain S110) protein is Threonine--tRNA ligase.